The primary structure comprises 155 residues: Glutamyl-tRNA(Gln) amidotransferase subunit C, chloroplastic/mitochondrial (155 aa).

The transit peptide at 1-52 directs the protein to the chloroplast and mitochondrion; sequence MATRALLAVIYASPNRCYISPSRIKIQSLTCSSSSHYYQRQSRKNHRIARSY.

This sequence belongs to the GatC family. Subunit of the heterotrimeric GatCAB amidotransferase (AdT) complex, composed of A, B and C subunits.

It is found in the mitochondrion. The protein localises to the plastid. The protein resides in the chloroplast. The enzyme catalyses L-glutamyl-tRNA(Gln) + L-glutamine + ATP + H2O = L-glutaminyl-tRNA(Gln) + L-glutamate + ADP + phosphate + H(+). Allows the formation of correctly charged Gln-tRNA(Gln) through the transamidation of misacylated Glu-tRNA(Gln) in chloroplasts and mitochondria. The reaction takes place in the presence of glutamine and ATP through an activated gamma-phospho-Glu-tRNA(Gln). This Arabidopsis thaliana (Mouse-ear cress) protein is Glutamyl-tRNA(Gln) amidotransferase subunit C, chloroplastic/mitochondrial.